The primary structure comprises 486 residues: Ribulose bisphosphate carboxylase large chain 1 (486 aa).

Substrate contacts are provided by Asn-125 and Thr-175. The Proton acceptor role is filled by Lys-177. Lys-179 lines the substrate pocket. Mg(2+) is bound by residues Lys-203, Asp-205, and Glu-206. The residue at position 203 (Lys-203) is an N6-carboxylysine. The Proton acceptor role is filled by His-295. Residues Arg-296, His-328, and Ser-380 each coordinate substrate.

This sequence belongs to the RuBisCO large chain family. Type I subfamily. Heterohexadecamer of 8 large chains and 8 small chains. It depends on Mg(2+) as a cofactor.

It catalyses the reaction 2 (2R)-3-phosphoglycerate + 2 H(+) = D-ribulose 1,5-bisphosphate + CO2 + H2O. It carries out the reaction D-ribulose 1,5-bisphosphate + O2 = 2-phosphoglycolate + (2R)-3-phosphoglycerate + 2 H(+). RuBisCO catalyzes two reactions: the carboxylation of D-ribulose 1,5-bisphosphate, the primary event in carbon dioxide fixation, as well as the oxidative fragmentation of the pentose substrate. Both reactions occur simultaneously and in competition at the same active site. The polypeptide is Ribulose bisphosphate carboxylase large chain 1 (Bradyrhizobium sp. (strain ORS 278)).